The chain runs to 343 residues: L-threonine 3-dehydrogenase (343 aa).

Cys-39 provides a ligand contact to Zn(2+). Residues Thr-41 and His-44 each act as charge relay system in the active site. Residues His-64, Glu-65, Cys-94, Cys-97, Cys-100, and Cys-108 each coordinate Zn(2+). NAD(+) is bound by residues Ile-176, Asp-196, Arg-201, 263 to 265 (LGI), and 287 to 288 (IY).

It belongs to the zinc-containing alcohol dehydrogenase family. In terms of assembly, homotetramer. Requires Zn(2+) as cofactor.

The protein resides in the cytoplasm. The enzyme catalyses L-threonine + NAD(+) = (2S)-2-amino-3-oxobutanoate + NADH + H(+). It functions in the pathway amino-acid degradation; L-threonine degradation via oxydo-reductase pathway; glycine from L-threonine: step 1/2. Catalyzes the NAD(+)-dependent oxidation of L-threonine to 2-amino-3-ketobutyrate. The polypeptide is L-threonine 3-dehydrogenase (Anaeromyxobacter sp. (strain Fw109-5)).